We begin with the raw amino-acid sequence, 159 residues long: Protransforming growth factor alpha (159 aa).

An N-terminal signal peptide occupies residues 1-23 (MVPATGQLALLALGILLAVCQAL). A propeptide spans 24 to 38 (ENSTSPLSDSPVAAA) (removed in mature form). Residues 24 to 97 (ENSTSPLSDS…AVVAASQKKQ (74 aa)) are Extracellular-facing. Asn25 carries an N-linked (GlcNAc...) asparagine glycan. The region spanning 44 to 83 (NKCPDSHTQYCFHGTCRFLVQEEKPACVCHSGYVGVRCEH) is the EGF-like domain. Disulfide bonds link Cys46-Cys59, Cys54-Cys70, and Cys72-Cys81. A propeptide spans 89–159 (VVAASQKKQA…TACCHSETVV (71 aa)) (removed in mature form). Residues 98 to 123 (AITALVVVSIVALAVLIITCVLIHCC) traverse the membrane as a helical segment. Residues 124-159 (QLRKHCEWCRALVCRHEKPSALLKGRTACCHSETVV) lie on the Cytoplasmic side of the membrane. Residues Cys152 and Cys153 are each lipidated (S-palmitoyl cysteine).

As to quaternary structure, interacts with the PDZ domains of SDCBP and SNTA1. The interaction with SDCBP, is required for the targeting to the cell surface. In the endoplasmic reticulum, in its immature form (i.e. with a prosegment and lacking full N-glycosylation), interacts with CNIH. In the Golgi apparatus, may form a complex with CNIH and GORASP2. Interacts (via cytoplasmic C-terminal domain) with NKD2. Interacts with MAGI3.

It localises to the secreted. The protein resides in the extracellular space. It is found in the cell membrane. Its function is as follows. TGF alpha is a mitogenic polypeptide that is able to bind to the EGF receptor/EGFR and to act synergistically with TGF beta to promote anchorage-independent cell proliferation in soft agar. This is Protransforming growth factor alpha (Tgfa) from Mus musculus (Mouse).